The following is a 533-amino-acid chain: CWF19-like protein 1 homolog (533 aa).

The segment at 290 to 314 is disordered; the sequence is EMGGAEDGAGNGRKRHNDGGNDGPR.

Belongs to the CWF19 family.

In Caenorhabditis elegans, this protein is CWF19-like protein 1 homolog.